The sequence spans 145 residues: Bacilliredoxin Acid345_1880 (145 aa).

This sequence belongs to the bacilliredoxin family.

The chain is Bacilliredoxin Acid345_1880 from Koribacter versatilis (strain Ellin345).